Here is a 464-residue protein sequence, read N- to C-terminus: MRTKTKLVLIPDRHFRRATFRKRNAGIRKKLHELTTLCDIKACAVIYSPFENPTVWPSTEGVQEVISEFMEKPATERSKTMMSHETFLRDQITKEQNKLESLRRENRETQLKHFMFDCVGGKMSEQQYGARDLQDLSLFTDQYLNQLNARKKFLTEYGESSSSVPPLFDVAGANPPVVADQAAVTVPPLFAVAGANLPVVADQAAVTVPPLFAVAGANLPVVADQAAVNVPTGFHNMNVNQNQYEPVQPYVPTGFSDHIQYQNMNFNQNQQEPVHYQALAVAGAGLPMTQNQYEPVHYQSLAVAGGGLPMSQLQYEPVQPYIPTVFSDNVQYQHMNLYQNQQEPVHYQALGVAGAGLPMNQNQYEPVQPYVPTGFSDHFQFENMNLNQNQQEPVQYQAPVDFNHQIQQGNYDMNLNQNMKHAHIPFMDGNYYNYHQPPTVGLTSTGHMPSTTTTTTNNNNNNNV.

The MADS-box domain occupies methionine 1–glutamate 60. Positions glutamate 85–phenylalanine 114 form a coiled coil. A disordered region spans residues threonine 443–valine 464. The span at threonine 451 to valine 464 shows a compositional bias: low complexity.

As to quaternary structure, interacts with AGL62.

The protein localises to the nucleus. Functionally, putative transcription factor. This chain is Agamous-like MADS-box protein AGL92 (AGL92), found in Arabidopsis thaliana (Mouse-ear cress).